A 662-amino-acid chain; its full sequence is F-box/WD repeat-containing protein pof10 (662 aa).

The segment covering 1–16 (MKSEPTSLDFTSSNLR) has biased composition (polar residues). Residues 1–27 (MKSEPTSLDFTSSNLRRMNRDHSSNNT) are disordered. The F-box domain maps to 28-74 (NRTVLNLPKEILIIIFSFLDPRSLLSAQCTCKYWKKLLSDDLSWRTA). 3 WD repeats span residues 215-260 (SHAD…SLQS), 263-302 (FRSSQILSLCFRPKYKMLLVDTFNYELNSYQLYLIPGYAR), and 429-468 (TAYSNFPITDIYLNEVAMVVGSASGYCGVYDTVTGNFLKK). In terms of domain architecture, UIM 1 spans 581–600 (SEEEIIAYVTMLSQEEEAKR). The segment at 617 to 645 (ENDEQATSSLNALSSNHEPPQEQANVAEL) is disordered. The segment covering 621 to 640 (QATSSLNALSSNHEPPQEQA) has biased composition (polar residues). One can recognise a UIM 2 domain in the interval 646 to 662 (NEQEQIELAMRLSLMEM).

In terms of assembly, part of a SCF (SKP1-cullin-F-box) protein ligase complex. Interacts with skp1.

It localises to the cytoplasm. Probably recognizes and binds to some phosphorylated proteins and promotes their ubiquitination and degradation. The chain is F-box/WD repeat-containing protein pof10 (pof10) from Schizosaccharomyces pombe (strain 972 / ATCC 24843) (Fission yeast).